The chain runs to 800 residues: Endonuclease MutS2 (800 aa).

Position 336–343 (G336–T343) interacts with ATP. One can recognise a Smr domain in the interval L725 to K800.

Belongs to the DNA mismatch repair MutS family. MutS2 subfamily. As to quaternary structure, homodimer. Binds to stalled ribosomes, contacting rRNA.

Endonuclease that is involved in the suppression of homologous recombination and thus may have a key role in the control of bacterial genetic diversity. Its function is as follows. Acts as a ribosome collision sensor, splitting the ribosome into its 2 subunits. Detects stalled/collided 70S ribosomes which it binds and splits by an ATP-hydrolysis driven conformational change. Acts upstream of the ribosome quality control system (RQC), a ribosome-associated complex that mediates the extraction of incompletely synthesized nascent chains from stalled ribosomes and their subsequent degradation. Probably generates substrates for RQC. This is Endonuclease MutS2 from Leuconostoc mesenteroides subsp. mesenteroides (strain ATCC 8293 / DSM 20343 / BCRC 11652 / CCM 1803 / JCM 6124 / NCDO 523 / NBRC 100496 / NCIMB 8023 / NCTC 12954 / NRRL B-1118 / 37Y).